Here is a 379-residue protein sequence, read N- to C-terminus: Very late expression factor 1 (379 aa).

A Tyr recombinase domain is found at 169 to 348 (VIDTILNFIN…YNIGLDETSS (180 aa)). Active-site residues include Arg-210, Lys-239, Arg-303, and His-326. Tyr-335 acts as the O-(3'-phospho-DNA)-tyrosine intermediate in catalysis. The segment covering 346–358 (TSSEEENNNDDDD) has biased composition (acidic residues). Positions 346–379 (TSSEEENNNDDDDAQHNRNSSGSSGESLLYYRNE) are disordered. Residues 362–379 (NRNSSGSSGESLLYYRNE) are compositionally biased toward low complexity.

This sequence belongs to the 'phage' integrase family.

In terms of biological role, plays a role in nucleocapsid assembly and serves an essential function during the final stages of the DNA packaging process. Participates in the processing of branched DNA molecules at the late stages of viral genome replication. The protein is Very late expression factor 1 (VLF-1) of Lepidoptera (butterflies and moths).